The primary structure comprises 282 residues: Chromatin modification-related protein YNG2 (282 aa).

The stretch at 35-86 (LIEEKKKYEQKESQIHKFIRQQGSIPKHPQEDGLDKEIKESLLKCQSLQREK) forms a coiled coil. The interval 123–217 (DGDMDSAAEA…KGQNGSPENE (95 aa)) is disordered. The span at 129–143 (AAEASRESSVVSNSS) shows a compositional bias: low complexity. At Ser183 the chain carries Phosphoserine. Phosphothreonine is present on Thr185. Ser188 carries the phosphoserine modification. The segment covering 191–203 (IEKKIARTKEFKN) has biased composition (basic and acidic residues). A compositionally biased stretch (polar residues) spans 204–214 (SRNGKGQNGSP). The PHD-type zinc finger occupies 222 to 271 (TLYCFCQRVSFGEMVACDGPNCKYEWFHYDCVNLKEPPKGTWYCPECKIE). 8 residues coordinate Zn(2+): Cys225, Cys227, Cys238, Cys243, His249, Cys252, Cys265, and Cys268.

It belongs to the ING family. As to quaternary structure, interacts with H3K4me3 and to a lesser extent with H3K4me2. Component of the NuA4 histone acetyltransferase complex composed of at least ACT1, ARP4, YAF9, VID21, SWC4, EAF3, EAF5, EAF6, EAF7, EPL1, ESA1, TRA1 and YNG2.

It is found in the nucleus. Its function is as follows. Component of the NuA4 histone acetyltransferase complex which is involved in transcriptional activation of selected genes principally by acetylation of nucleosomal histone H4 and H2A. The NuA4 complex is also involved in DNA repair. Involved in cell cycle progression and meiosis. The polypeptide is Chromatin modification-related protein YNG2 (YNG2) (Saccharomyces cerevisiae (strain ATCC 204508 / S288c) (Baker's yeast)).